The chain runs to 336 residues: Alpha-glucoside transport system permease protein AglF (336 aa).

The next 8 membrane-spanning stretches (helical) occupy residues 4–24 (LIAAILTMVAGVLVCAAYFWS), 55–75 (PWLFLAPALLALTLYLVYPVV), 113–133 (FLWLLVVPALSTFFGLIIAAL), 146–166 (LIFMPMAISFVGAAVIWKFIY), 176–196 (IGLLNAIVVALGGEPQAWITL), 202–222 (FFLMVILIWIQTGFAMVILSA), 258–278 (IAVVWTTITILVLKVFDIVLA), and 304–324 (FGRGAAIAVVIMILVVPIMIW). The region spanning 109-325 (IFNNFLWLLV…ILVVPIMIWN (217 aa)) is the ABC transmembrane type-1 domain.

This sequence belongs to the binding-protein-dependent transport system permease family. MalFG subfamily.

It is found in the cell inner membrane. Functionally, part of the binding-protein-dependent transport system for alpha-glucosides such as sucrose, maltose and trehalose. Probably responsible for the translocation of the substrate across the membrane. This Rhizobium meliloti (strain 1021) (Ensifer meliloti) protein is Alpha-glucoside transport system permease protein AglF (aglF).